Here is a 349-residue protein sequence, read N- to C-terminus: Holliday junction branch migration complex subunit RuvB (349 aa).

The large ATPase domain (RuvB-L) stretch occupies residues 1-183; the sequence is MTDPSRLVTP…FGIPIRLNFY (183 aa). Residues Leu-22, Arg-23, Gly-64, Lys-67, Thr-68, Thr-69, 130 to 132, Arg-173, Tyr-183, and Arg-220 each bind ATP; that span reads EDF. Thr-68 contacts Mg(2+). Positions 184–254 are small ATPAse domain (RuvB-S); that stretch reads TIEELESIVT…IADHALGALE (71 aa). The tract at residues 257 to 349 is head domain (RuvB-H); sequence SAGLDAMDRR…GLFGDTGDQE (93 aa). The DNA site is built by Arg-293, Arg-312, and Arg-317.

This sequence belongs to the RuvB family. As to quaternary structure, homohexamer. Forms an RuvA(8)-RuvB(12)-Holliday junction (HJ) complex. HJ DNA is sandwiched between 2 RuvA tetramers; dsDNA enters through RuvA and exits via RuvB. An RuvB hexamer assembles on each DNA strand where it exits the tetramer. Each RuvB hexamer is contacted by two RuvA subunits (via domain III) on 2 adjacent RuvB subunits; this complex drives branch migration. In the full resolvosome a probable DNA-RuvA(4)-RuvB(12)-RuvC(2) complex forms which resolves the HJ.

It localises to the cytoplasm. It catalyses the reaction ATP + H2O = ADP + phosphate + H(+). In terms of biological role, the RuvA-RuvB-RuvC complex processes Holliday junction (HJ) DNA during genetic recombination and DNA repair, while the RuvA-RuvB complex plays an important role in the rescue of blocked DNA replication forks via replication fork reversal (RFR). RuvA specifically binds to HJ cruciform DNA, conferring on it an open structure. The RuvB hexamer acts as an ATP-dependent pump, pulling dsDNA into and through the RuvAB complex. RuvB forms 2 homohexamers on either side of HJ DNA bound by 1 or 2 RuvA tetramers; 4 subunits per hexamer contact DNA at a time. Coordinated motions by a converter formed by DNA-disengaged RuvB subunits stimulates ATP hydrolysis and nucleotide exchange. Immobilization of the converter enables RuvB to convert the ATP-contained energy into a lever motion, pulling 2 nucleotides of DNA out of the RuvA tetramer per ATP hydrolyzed, thus driving DNA branch migration. The RuvB motors rotate together with the DNA substrate, which together with the progressing nucleotide cycle form the mechanistic basis for DNA recombination by continuous HJ branch migration. Branch migration allows RuvC to scan DNA until it finds its consensus sequence, where it cleaves and resolves cruciform DNA. In Rhodopseudomonas palustris (strain ATCC BAA-98 / CGA009), this protein is Holliday junction branch migration complex subunit RuvB.